Reading from the N-terminus, the 206-residue chain is Venom allergen 5 (206 aa).

4 disulfides stabilise this stretch: Cys-5-Cys-18, Cys-9-Cys-103, Cys-28-Cys-96, and Cys-172-Cys-189. The SCP domain maps to 47–191 (LKVHNDFRQK…WYTHYLVCNY (145 aa)).

This sequence belongs to the CRISP family. Venom allergen 5-like subfamily. Expressed by the venom gland.

The protein resides in the secreted. This Vespula vidua (Ground hornet) protein is Venom allergen 5.